The following is a 60-amino-acid chain: UPF0434 protein KPN78578_09190 (60 aa).

Belongs to the UPF0434 family.

The chain is UPF0434 protein KPN78578_09190 from Klebsiella pneumoniae subsp. pneumoniae (strain ATCC 700721 / MGH 78578).